The primary structure comprises 89 residues: Large ribosomal subunit protein eL34 (89 aa).

The tract at residues 41–69 (RPLNGVPRGRPSELRKLPKTAKRPERPYP) is disordered. Residues 50–66 (RPSELRKLPKTAKRPER) are compositionally biased toward basic and acidic residues.

It belongs to the eukaryotic ribosomal protein eL34 family.

This chain is Large ribosomal subunit protein eL34, found in Thermococcus gammatolerans (strain DSM 15229 / JCM 11827 / EJ3).